A 338-amino-acid polypeptide reads, in one-letter code: MAGSHPYFNLPDSTHPSPPSGPPSLRWHQRCQPSDATNGLLVALLGGGLPAGFVGPLSRMAYQASNLPSLELLICRCLFHLPIALLLKLCGDPLLGPPDIRGRACFCALLNVLSIGCAYSAVQVVPTGNAATVLKGSSTVCSAVLTLCLESQGLSGYDWCGLLGSILGLIIIVGPGLWTLQEGTMGVYTALGYVQAFLGGLALSLGLLVYRSLHFPSFLPTVAFLSGLVGLLGSVPGLFVLHTPVLPSDLLSWSCVGAVGILTLVSFTCVGYAVTKAHPALVCAVLHSEVVVALILQYYMLPETVAPSDIMGAGVVLGNITIIPAWNLSCERTGKVEE.

The tract at residues 1-28 (MAGSHPYFNLPDSTHPSPPSGPPSLRWH) is disordered. 9 consecutive transmembrane segments (helical) span residues 37–57 (TNGL…VGPL), 67–87 (LPSL…ALLL), 105–125 (CFCA…VQVV), 160–180 (CGLL…LWTL), 190–210 (ALGY…LLVY), 221–241 (TVAF…LFVL), 250–270 (LLSW…FTCV), 281–301 (LVCA…YYML), and 310–330 (IMGA…NLSC). Residues 49–174 (LPAGFVGPLS…SILGLIIIVG (126 aa)) enclose the EamA 1 domain. In terms of domain architecture, EamA 2 spans 272-325 (YAVTKAHPALVCAVLHSEVVVALILQYYMLPETVAPSDIMGAGVVLGNITIIPA).

Belongs to the SLC35G solute transporter family.

Its subcellular location is the membrane. The polypeptide is Solute carrier family 35 member G5 (SLC35G5) (Gorilla gorilla gorilla (Western lowland gorilla)).